A 256-amino-acid polypeptide reads, in one-letter code: Chorismate mutase (256 aa).

A Chorismate mutase domain is found at 3 to 255 (FTKPETVLNL…EVEYLLRRLE (253 aa)). L-tyrosine contacts are provided by Arg75 and Arg76. Residues Asn138, Asn139, Gly141, and Ser142 each contribute to the L-tryptophan site. Residues Asn139, Gly141, Ser142, and Thr145 each coordinate L-tyrosine.

In terms of assembly, homodimer.

The protein resides in the cytoplasm. The enzyme catalyses chorismate = prephenate. It functions in the pathway metabolic intermediate biosynthesis; prephenate biosynthesis; prephenate from chorismate: step 1/1. Its activity is regulated as follows. Each dimer has two allosteric binding sites that can bind the regulatory effectors tryptophan or tyrosine. Can bind either one tryptophan or one tyrosine, two tryptophan or two tyrosine or one tryptophan and one tyrosine, which differentially affect the catalytic activity. Activated by tryptophan and subject to feedback inhibition by tyrosine. In the presence of both tryptophan and tyrosine, the enzyme is in the activated state. Functionally, catalyzes the Claisen rearrangement of chorismate to prephenate. Acts at the first branch point in the aromatic amino acid pathway where it steers biosynthesis towards phenylalanine and tyrosine, and away from tryptophan. This chain is Chorismate mutase, found in Saccharomyces cerevisiae (strain ATCC 204508 / S288c) (Baker's yeast).